Here is a 302-residue protein sequence, read N- to C-terminus: tRNA-cytidine(32) 2-sulfurtransferase (302 aa).

The short motif at 45–50 (SGGKDS) is the PP-loop motif element. [4Fe-4S] cluster contacts are provided by Cys-120, Cys-123, and Cys-211.

Belongs to the TtcA family. In terms of assembly, homodimer. The cofactor is Mg(2+). [4Fe-4S] cluster is required as a cofactor.

The protein resides in the cytoplasm. It carries out the reaction cytidine(32) in tRNA + S-sulfanyl-L-cysteinyl-[cysteine desulfurase] + AH2 + ATP = 2-thiocytidine(32) in tRNA + L-cysteinyl-[cysteine desulfurase] + A + AMP + diphosphate + H(+). The protein operates within tRNA modification. Its function is as follows. Catalyzes the ATP-dependent 2-thiolation of cytidine in position 32 of tRNA, to form 2-thiocytidine (s(2)C32). The sulfur atoms are provided by the cysteine/cysteine desulfurase (IscS) system. This is tRNA-cytidine(32) 2-sulfurtransferase from Cellvibrio japonicus (strain Ueda107) (Pseudomonas fluorescens subsp. cellulosa).